The following is a 469-amino-acid chain: 3-isopropylmalate dehydratase large subunit (469 aa).

Cys-349, Cys-409, and Cys-412 together coordinate [4Fe-4S] cluster.

The protein belongs to the aconitase/IPM isomerase family. LeuC type 1 subfamily. Heterodimer of LeuC and LeuD. [4Fe-4S] cluster is required as a cofactor.

It catalyses the reaction (2R,3S)-3-isopropylmalate = (2S)-2-isopropylmalate. The protein operates within amino-acid biosynthesis; L-leucine biosynthesis; L-leucine from 3-methyl-2-oxobutanoate: step 2/4. Its function is as follows. Catalyzes the isomerization between 2-isopropylmalate and 3-isopropylmalate, via the formation of 2-isopropylmaleate. The polypeptide is 3-isopropylmalate dehydratase large subunit (Methylorubrum extorquens (strain CM4 / NCIMB 13688) (Methylobacterium extorquens)).